The sequence spans 260 residues: UPF0246 protein Veis_4789 (260 aa).

The protein belongs to the UPF0246 family.

This Verminephrobacter eiseniae (strain EF01-2) protein is UPF0246 protein Veis_4789.